The sequence spans 258 residues: Trans-aconitate 2-methyltransferase (258 aa).

This sequence belongs to the methyltransferase superfamily. Tam family.

It localises to the cytoplasm. It carries out the reaction trans-aconitate + S-adenosyl-L-methionine = (E)-3-(methoxycarbonyl)pent-2-enedioate + S-adenosyl-L-homocysteine. Functionally, catalyzes the S-adenosylmethionine monomethyl esterification of trans-aconitate. In Deinococcus radiodurans (strain ATCC 13939 / DSM 20539 / JCM 16871 / CCUG 27074 / LMG 4051 / NBRC 15346 / NCIMB 9279 / VKM B-1422 / R1), this protein is Trans-aconitate 2-methyltransferase.